The chain runs to 183 residues: uncharacterized protein (183 aa).

This is an uncharacterized protein from Archaeoglobus fulgidus (strain ATCC 49558 / DSM 4304 / JCM 9628 / NBRC 100126 / VC-16).